The primary structure comprises 254 residues: Hemin import ATP-binding protein HmuV (254 aa).

The region spanning 2–239 is the ABC transporter domain; the sequence is LNINQVNINL…DTLSQVWHYD (238 aa). 34–41 is an ATP binding site; the sequence is GPNGAGKS.

It belongs to the ABC transporter superfamily. Heme (hemin) importer (TC 3.A.1.14.5) family. In terms of assembly, the complex is composed of two ATP-binding proteins (HmuV), two transmembrane proteins (HmuU) and a solute-binding protein (HmuT).

The protein resides in the cell inner membrane. Its function is as follows. Part of the ABC transporter complex HmuTUV involved in hemin import. Responsible for energy coupling to the transport system. In Shewanella denitrificans (strain OS217 / ATCC BAA-1090 / DSM 15013), this protein is Hemin import ATP-binding protein HmuV.